Here is a 326-residue protein sequence, read N- to C-terminus: Putative ABC transporter ATP-binding protein MPN_334 (326 aa).

The region spanning V7 to N239 is the ABC transporter domain. ATP is bound at residue G42–T49.

This sequence belongs to the ABC transporter superfamily.

The polypeptide is Putative ABC transporter ATP-binding protein MPN_334 (Mycoplasma pneumoniae (strain ATCC 29342 / M129 / Subtype 1) (Mycoplasmoides pneumoniae)).